A 74-amino-acid chain; its full sequence is Small ribosomal subunit protein bS18 (74 aa).

The protein belongs to the bacterial ribosomal protein bS18 family. In terms of assembly, part of the 30S ribosomal subunit. Forms a tight heterodimer with protein bS6.

Binds as a heterodimer with protein bS6 to the central domain of the 16S rRNA, where it helps stabilize the platform of the 30S subunit. The polypeptide is Small ribosomal subunit protein bS18 (Novosphingobium aromaticivorans (strain ATCC 700278 / DSM 12444 / CCUG 56034 / CIP 105152 / NBRC 16084 / F199)).